The chain runs to 336 residues: D-aspartate oxidase (336 aa).

FAD-binding residues include Glu34, Lys35, Thr41, Ser42, Gly304, Val308, and Ser309. A Microbody targeting signal motif is present at residues 334–336; it reads SKL.

This sequence belongs to the DAMOX/DASOX family. In terms of assembly, monomer. The cofactor is FAD.

The protein resides in the peroxisome matrix. The enzyme catalyses D-aspartate + O2 + H2O = oxaloacetate + H2O2 + NH4(+). It catalyses the reaction D-glutamate + O2 + H2O = H2O2 + 2-oxoglutarate + NH4(+). In terms of biological role, selectively catalyzes the oxidative deamination of acidic amino acids. Suppresses the level of D-aspartate in the brain, an amino acid that can act as an agonist for glutamate receptors. Protects the organism from the toxicity of D-amino acids. May also function in the intestine. The polypeptide is D-aspartate oxidase (Octopus vulgaris (Common octopus)).